We begin with the raw amino-acid sequence, 351 residues long: Adenine deaminase (351 aa).

Residues His20, His22, and His200 each contribute to the Zn(2+) site. Catalysis depends on Glu203, which acts as the Proton donor. Residue Asp281 coordinates Zn(2+). Asp282 serves as a coordination point for substrate.

The protein belongs to the metallo-dependent hydrolases superfamily. Adenosine and AMP deaminases family. Adenine deaminase type 2 subfamily. The cofactor is Zn(2+).

It carries out the reaction adenine + H2O + H(+) = hypoxanthine + NH4(+). In terms of biological role, catalyzes the hydrolytic deamination of adenine to hypoxanthine. Plays an important role in the purine salvage pathway and in nitrogen catabolism. In Cupriavidus taiwanensis (strain DSM 17343 / BCRC 17206 / CCUG 44338 / CIP 107171 / LMG 19424 / R1) (Ralstonia taiwanensis (strain LMG 19424)), this protein is Adenine deaminase.